Consider the following 851-residue polypeptide: Beta-galactosidase 3 (851 aa).

An N-terminal signal peptide occupies residues 1-29 (MAGASSYFSLRRLLLLLLPLVPLLGATTA). Residue Asn35 is glycosylated (N-linked (GlcNAc...) asparagine). Residue Glu194 is the Proton donor of the active site. Residue Glu263 is the Nucleophile of the active site. 4 N-linked (GlcNAc...) asparagine glycosylation sites follow: Asn361, Asn475, Asn528, and Asn533. One can recognise an SUEL-type lectin domain in the interval 765 to 851 (GRDAAKVQLS…KTLAIEADCS (87 aa)).

The protein belongs to the glycosyl hydrolase 35 family.

The protein resides in the secreted. Its subcellular location is the extracellular space. The protein localises to the apoplast. The catalysed reaction is Hydrolysis of terminal non-reducing beta-D-galactose residues in beta-D-galactosides.. In Oryza sativa subsp. japonica (Rice), this protein is Beta-galactosidase 3.